The sequence spans 123 residues: MRIQSLLLLGALLAVGSQPPAAFGRKKGEKPGACPPDDGPCLLSVPDQCMEDRQCPLTRKCCYRACFRQCVPRVSVKLGSCPEDQLRCLSPMNHLCHKDADCSGKKRCCSSACGRDCRDPVRG.

Positions 1–24 (MRIQSLLLLGALLAVGSQPPAAFG) are cleaved as a signal peptide. WAP domains follow at residues 27-73 (KGEK…CVPR) and 74-121 (VSVK…RDPV). Disulfide bonds link C34–C62, C41–C66, C49–C61, C55–C70, C81–C109, C88–C113, C96–C108, and C102–C117.

Its subcellular location is the secreted. Functionally, putative acid-stable proteinase inhibitor. The protein is WAP four-disulfide core domain protein 5 (WFDC5) of Aotus nancymaae (Ma's night monkey).